Consider the following 610-residue polypeptide: Synaptotagmin-like protein 3 (610 aa).

A RabBD domain is found at 4 to 123 (EIDLSALKEL…IKTGEWFYEE (120 aa)). The tract at residues 219-239 (RQCVGQTERRSQSDTAVNVTT) is disordered. C2 domains follow at residues 306-428 (VTGE…TQSF) and 462-603 (RPRK…NLWT).

Monomer. Binds NRXN1. Binds RAB27A that has been activated by GTP-binding via its N-terminus.

It localises to the endomembrane system. Functionally, may act as Rab effector protein and play a role in vesicle trafficking. Binds phospholipids in the presence of calcium ions. This Homo sapiens (Human) protein is Synaptotagmin-like protein 3 (SYTL3).